The following is a 168-amino-acid chain: Protein-export protein SecB (168 aa).

It belongs to the SecB family. Homotetramer, a dimer of dimers. One homotetramer interacts with 1 SecA dimer.

The protein resides in the cytoplasm. In terms of biological role, one of the proteins required for the normal export of preproteins out of the cell cytoplasm. It is a molecular chaperone that binds to a subset of precursor proteins, maintaining them in a translocation-competent state. It also specifically binds to its receptor SecA. This is Protein-export protein SecB from Glaesserella parasuis serovar 5 (strain SH0165) (Haemophilus parasuis).